The chain runs to 181 residues: uncharacterized protein (181 aa).

This sequence belongs to the methyltransferase superfamily.

This is an uncharacterized protein from Bacillus subtilis (strain 168).